Reading from the N-terminus, the 367-residue chain is Forkhead box protein I2-B (367 aa).

The segment covering 31–40 has biased composition (low complexity); it reads QQQNQQLPQR. Residues 31–51 form a disordered region; sequence QQQNQQLPQRPAAPPAPGYGL. A DNA-binding region (fork-head) is located at residues 124–218; sequence RPPYSYSSLI…DNGNFRRKRK (95 aa). The tract at residues 224-254 is disordered; the sequence is VGAGFDEESNEDKKPLALKSLGPDSPGGASV.

The protein localises to the nucleus. Functionally, possible transcriptional activator. The chain is Forkhead box protein I2-B (foxi2-b) from Xenopus laevis (African clawed frog).